We begin with the raw amino-acid sequence, 250 residues long: Flavin-dependent thymidylate synthase (250 aa).

In terms of domain architecture, ThyX spans 7-233; sequence LRVQLIAKTD…PSIFGDFDIA (227 aa). FAD is bound by residues S71, 95–97, and Q103; that span reads RHR. Residues 92 to 95, 103 to 107, and R172 each bind dUMP; these read ELIR and QLSQR. The ThyX motif signature appears at 95-105; the sequence is RHRHFSYSQLS. FAD-binding positions include 188–190 and H194; that span reads NYR. A dUMP-binding site is contributed by R199. R199 (involved in ionization of N3 of dUMP, leading to its activation) is an active-site residue.

This sequence belongs to the thymidylate synthase ThyX family. As to quaternary structure, homotetramer. It depends on FAD as a cofactor.

The enzyme catalyses dUMP + (6R)-5,10-methylene-5,6,7,8-tetrahydrofolate + NADPH + H(+) = dTMP + (6S)-5,6,7,8-tetrahydrofolate + NADP(+). It functions in the pathway pyrimidine metabolism; dTTP biosynthesis. Catalyzes the reductive methylation of 2'-deoxyuridine-5'-monophosphate (dUMP) to 2'-deoxythymidine-5'-monophosphate (dTMP) while utilizing 5,10-methylenetetrahydrofolate (mTHF) as the methyl donor, and NADPH and FADH(2) as the reductant. In Mycobacteroides abscessus (strain ATCC 19977 / DSM 44196 / CCUG 20993 / CIP 104536 / JCM 13569 / NCTC 13031 / TMC 1543 / L948) (Mycobacterium abscessus), this protein is Flavin-dependent thymidylate synthase.